The primary structure comprises 588 residues: Methylcrotonoyl-CoA carboxylase beta chain, mitochondrial (588 aa).

The 258-residue stretch at Met-72–Glu-329 folds into the CoA carboxyltransferase N-terminal domain. The carboxyltransferase stretch occupies residues Met-72–Ala-570. In terms of domain architecture, CoA carboxyltransferase C-terminal spans Glu-329–Ala-570. The interval Arg-366–Asn-395 is acyl-CoA binding.

This sequence belongs to the AccD/PCCB family. Probably a dodecamer composed of six biotin-containing alpha subunits and six beta subunits.

The protein localises to the mitochondrion matrix. The enzyme catalyses 3-methylbut-2-enoyl-CoA + hydrogencarbonate + ATP = 3-methyl-(2E)-glutaconyl-CoA + ADP + phosphate + H(+). The protein operates within amino-acid degradation; L-leucine degradation; (S)-3-hydroxy-3-methylglutaryl-CoA from 3-isovaleryl-CoA: step 2/3. In terms of biological role, carboxyltransferase subunit of the 3-methylcrotonyl-CoA carboxylase, an enzyme that catalyzes the conversion of 3-methylcrotonyl-CoA to 3-methylglutaconyl-CoA, a critical step for leucine and isovaleric acid catabolism. This Dictyostelium discoideum (Social amoeba) protein is Methylcrotonoyl-CoA carboxylase beta chain, mitochondrial (mccb).